A 116-amino-acid chain; its full sequence is Dynein light chain Tctex-type 3 (116 aa).

Residue tyrosine 4 is modified to 3'-nitrotyrosine.

Belongs to the dynein light chain Tctex-type family. In terms of assembly, homodimer. The cytoplasmic dynein 1 complex consists of two catalytic heavy chains (HCs) and a number of non-catalytic subunits presented by intermediate chains (ICs), light intermediate chains (LICs) and light chains (LCs); the composition seems to vary in respect to the IC, LIC and LC composition. The heavy chain homodimer serves as a scaffold for the probable homodimeric assembly of the respective non-catalytic subunits. The ICs and LICs bind directly to the HC dimer and the LCs assemble on the IC dimer. DYNLT1 and DYNLT3 compete for association with dynein IC (DYNC1I1 or DYNC1I2). Self-associates. Interacts with DYNC1I1 and DYNC1I2. Interacts with BUB3. Interacts with SATB1 in nucleus to form complex with matrix attachment regions (MARs) of DNA.

The protein resides in the nucleus. Its subcellular location is the cytoplasm. It is found in the cytoskeleton. It localises to the chromosome. The protein localises to the centromere. The protein resides in the kinetochore. Functionally, acts as one of several non-catalytic accessory components of the cytoplasmic dynein 1 complex that are thought to be involved in linking dynein to cargos and to adapter proteins that regulate dynein function. Cytoplasmic dynein 1 acts as a motor for the intracellular retrograde motility of vesicles and organelles along microtubules. Probably binds BUB3 as part of transport cargo. Required for the efficient progression through mitosis. The sequence is that of Dynein light chain Tctex-type 3 (Dynlt3) from Mus musculus (Mouse).